We begin with the raw amino-acid sequence, 446 residues long: Adenylosuccinate synthetase (446 aa).

GTP-binding positions include glycine 20–lysine 26 and glycine 48–threonine 50. Aspartate 21 (proton acceptor) is an active-site residue. Mg(2+) is bound by residues aspartate 21 and glycine 48. IMP contacts are provided by residues aspartate 21–lysine 24, asparagine 46–histidine 49, threonine 137, arginine 151, glutamine 232, threonine 247, and arginine 319. The Proton donor role is filled by histidine 49. Residue serine 315 to arginine 321 coordinates substrate. GTP-binding positions include arginine 321, lysine 347–aspartate 349, and serine 429–glycine 431.

This sequence belongs to the adenylosuccinate synthetase family. Homodimer. It depends on Mg(2+) as a cofactor.

Its subcellular location is the cytoplasm. The enzyme catalyses IMP + L-aspartate + GTP = N(6)-(1,2-dicarboxyethyl)-AMP + GDP + phosphate + 2 H(+). The protein operates within purine metabolism; AMP biosynthesis via de novo pathway; AMP from IMP: step 1/2. Plays an important role in the de novo pathway of purine nucleotide biosynthesis. Catalyzes the first committed step in the biosynthesis of AMP from IMP. In Polynucleobacter necessarius subsp. necessarius (strain STIR1), this protein is Adenylosuccinate synthetase.